Reading from the N-terminus, the 223-residue chain is Phosphoribosylformylglycinamidine synthase subunit PurQ (223 aa).

In terms of domain architecture, Glutamine amidotransferase type-1 spans 4 to 223 (FAVIVFPGTN…FKSIVEWMKK (220 aa)). Cys-85 functions as the Nucleophile in the catalytic mechanism. Active-site residues include His-196 and Glu-198.

As to quaternary structure, part of the FGAM synthase complex composed of 1 PurL, 1 PurQ and 2 PurS subunits.

It is found in the cytoplasm. The catalysed reaction is N(2)-formyl-N(1)-(5-phospho-beta-D-ribosyl)glycinamide + L-glutamine + ATP + H2O = 2-formamido-N(1)-(5-O-phospho-beta-D-ribosyl)acetamidine + L-glutamate + ADP + phosphate + H(+). It carries out the reaction L-glutamine + H2O = L-glutamate + NH4(+). It participates in purine metabolism; IMP biosynthesis via de novo pathway; 5-amino-1-(5-phospho-D-ribosyl)imidazole from N(2)-formyl-N(1)-(5-phospho-D-ribosyl)glycinamide: step 1/2. Part of the phosphoribosylformylglycinamidine synthase complex involved in the purines biosynthetic pathway. Catalyzes the ATP-dependent conversion of formylglycinamide ribonucleotide (FGAR) and glutamine to yield formylglycinamidine ribonucleotide (FGAM) and glutamate. The FGAM synthase complex is composed of three subunits. PurQ produces an ammonia molecule by converting glutamine to glutamate. PurL transfers the ammonia molecule to FGAR to form FGAM in an ATP-dependent manner. PurS interacts with PurQ and PurL and is thought to assist in the transfer of the ammonia molecule from PurQ to PurL. This chain is Phosphoribosylformylglycinamidine synthase subunit PurQ, found in Pyrococcus horikoshii (strain ATCC 700860 / DSM 12428 / JCM 9974 / NBRC 100139 / OT-3).